The sequence spans 137 residues: Cellular retinoic acid-binding protein 1 (137 aa).

The Nuclear localization signal motif lies at 21-31; the sequence is KALGVNTMLRK. 132-134 provides a ligand contact to all-trans-retinoate; sequence RIY.

The protein belongs to the calycin superfamily. Fatty-acid binding protein (FABP) family.

The protein resides in the cytoplasm. Cytosolic CRABPs may regulate the access of retinoic acid to the nuclear retinoic acid receptors. In Takifugu rubripes (Japanese pufferfish), this protein is Cellular retinoic acid-binding protein 1 (crabp1).